Consider the following 246-residue polypeptide: AIGDKPGPNITATYGSKWLEARATFYGSNPRGAAPDDHGGACGYKDVDKPPFDGMTACGNEPIFKDGLGCRACYEIKCKEPVECSGEPVLVKITDKNYEHIAAYHFDLSGKAFGAMAKKGQEDKLRKAGELTLQFRRVKCKYPSGTKITFHIEKGSNDHYLALLVKYAAGDGNIVAVDIKPRDSDEFIPMKSSWGAIWRIDPKKPLKGPFSIRLTSEGGAHLVQDDVIPANWKPDTVYTSKLQFGA.

N-linked (GlcNAc...) asparagine glycosylation occurs at Asn9. The Expansin-like EG45 domain occupies 39-145 (GGACGYKDVD…RRVKCKYPSG (107 aa)). Residues 159-240 (HYLALLVKYA…NWKPDTVYTS (82 aa)) form the Expansin-like CBD domain.

Belongs to the expansin family. Expansin B subfamily.

Its subcellular location is the secreted. This Cynodon dactylon (Bermuda grass) protein is Major pollen allergen Cyn d 1 (CYND1).